The chain runs to 190 residues: Syndecan-2-B (190 aa).

The N-terminal stretch at 1-22 is a signal peptide; the sequence is MRNVWLIVPFALLAAFSGETWA. The Extracellular portion of the chain corresponds to 23–136; that stretch reads QADRDLYIDS…NLFHRTEVLA (114 aa). The segment at 34 to 60 is disordered; it reads ESSGNYPVDDDDYSSGSGSGIPAHDDD. O-linked (Xyl...) (glycosaminoglycan) serine glycosylation is found at Ser-36, Ser-48, Ser-50, and Ser-52. A helical membrane pass occupies residues 137-157; the sequence is AVIAGGGIGFLFAVFLILLLV. Residues 158 to 190 lie on the Cytoplasmic side of the membrane; the sequence is YRMRKKDEGSYDLGERKPSSAVYQKAPTKEFYA. A disordered region spans residues 167 to 190; the sequence is SYDLGERKPSSAVYQKAPTKEFYA.

It belongs to the syndecan proteoglycan family. O-glycosylated; contains both heparan sulfate and chondroitin sulfate.

It localises to the membrane. Its function is as follows. Cell surface proteoglycan. The polypeptide is Syndecan-2-B (sdc2-b) (Xenopus laevis (African clawed frog)).